The following is a 215-amino-acid chain: MTTEGIFISFEGIDGAGKSTHIDALAQAFRAQGRAVTLTREPGGTPLAEKLRVLVLNDAMDAMTEALLVFAARRDHLQQLIEPALARGDVVLCDRFTDATFAYQGAGRGFDLKILSFLERTVQSIQGLEPDFIRNPDLTVWFDLAAAIAAQRLAGARSPDKFEAQPVEFFRRVSDGYLNRMTACPSRFARIEANQTREAVWQDVLHAVQARGWLT.

Position 12-19 (12-19) interacts with ATP; it reads GIDGAGKS.

This sequence belongs to the thymidylate kinase family.

It carries out the reaction dTMP + ATP = dTDP + ADP. In terms of biological role, phosphorylation of dTMP to form dTDP in both de novo and salvage pathways of dTTP synthesis. The protein is Thymidylate kinase of Albidiferax ferrireducens (strain ATCC BAA-621 / DSM 15236 / T118) (Rhodoferax ferrireducens).